A 178-amino-acid chain; its full sequence is Flagellar transcriptional regulator FlhC (178 aa).

4 residues coordinate Zn(2+): Cys-138, Cys-141, Cys-158, and Cys-161.

Belongs to the FlhC family. As to quaternary structure, heterohexamer composed of two FlhC and four FlhD subunits. Each FlhC binds a FlhD dimer, forming a heterotrimer, and a hexamer assembles by dimerization of two heterotrimers. It depends on Zn(2+) as a cofactor.

The protein localises to the cytoplasm. Its function is as follows. Functions in complex with FlhD as a master transcriptional regulator that regulates transcription of several flagellar and non-flagellar operons by binding to their promoter region. Activates expression of class 2 flagellar genes, including fliA, which is a flagellum-specific sigma factor that turns on the class 3 genes. Also regulates genes whose products function in a variety of physiological pathways. The protein is Flagellar transcriptional regulator FlhC of Erwinia tasmaniensis (strain DSM 17950 / CFBP 7177 / CIP 109463 / NCPPB 4357 / Et1/99).